The following is a 199-amino-acid chain: Adenylyl-sulfate kinase (199 aa).

34 to 41 (GLSGSGKS) lines the ATP pocket. Residue Ser108 is the Phosphoserine intermediate of the active site.

It belongs to the APS kinase family.

It catalyses the reaction adenosine 5'-phosphosulfate + ATP = 3'-phosphoadenylyl sulfate + ADP + H(+). It participates in sulfur metabolism; hydrogen sulfide biosynthesis; sulfite from sulfate: step 2/3. Functionally, catalyzes the synthesis of activated sulfate. The chain is Adenylyl-sulfate kinase from Staphylococcus carnosus (strain TM300).